A 248-amino-acid polypeptide reads, in one-letter code: 7-cyano-7-deazaguanine synthase (248 aa).

22–32 (LSGGLDSTTCL) contacts ATP. C216, C225, C228, and C231 together coordinate Zn(2+).

This sequence belongs to the QueC family. Zn(2+) is required as a cofactor.

The enzyme catalyses 7-carboxy-7-deazaguanine + NH4(+) + ATP = 7-cyano-7-deazaguanine + ADP + phosphate + H2O + H(+). Its pathway is purine metabolism; 7-cyano-7-deazaguanine biosynthesis. In terms of biological role, catalyzes the ATP-dependent conversion of 7-carboxy-7-deazaguanine (CDG) to 7-cyano-7-deazaguanine (preQ(0)). The sequence is that of 7-cyano-7-deazaguanine synthase from Leptospira biflexa serovar Patoc (strain Patoc 1 / Ames).